The sequence spans 246 residues: DNA repair protein RecO (246 aa).

This sequence belongs to the RecO family.

Functionally, involved in DNA repair and RecF pathway recombination. The chain is DNA repair protein RecO from Nitrosococcus oceani (strain ATCC 19707 / BCRC 17464 / JCM 30415 / NCIMB 11848 / C-107).